The chain runs to 328 residues: L-lactate dehydrogenase (328 aa).

NAD(+) contacts are provided by residues valine 18, glutamate 39, lysine 46, tyrosine 71, and 85–86 (GA). Substrate is bound by residues glutamine 88 and arginine 94. NAD(+)-binding positions include serine 107, 124–126 (AAN), and serine 149. Residue 126–129 (NPVD) coordinates substrate. Substrate is bound at residue 154–157 (DSAR). The beta-D-fructose 1,6-bisphosphate site is built by arginine 159 and histidine 174. Catalysis depends on histidine 181, which acts as the Proton acceptor. Tyrosine 226 bears the Phosphotyrosine mark. Threonine 235 provides a ligand contact to substrate.

Belongs to the LDH/MDH superfamily. LDH family. Homotetramer.

It localises to the cytoplasm. It catalyses the reaction (S)-lactate + NAD(+) = pyruvate + NADH + H(+). The protein operates within fermentation; pyruvate fermentation to lactate; (S)-lactate from pyruvate: step 1/1. Its activity is regulated as follows. Allosterically activated by fructose 1,6-bisphosphate (FBP). Functionally, catalyzes the conversion of lactate to pyruvate. In Streptococcus thermophilus (strain ATCC BAA-250 / LMG 18311), this protein is L-lactate dehydrogenase.